A 312-amino-acid polypeptide reads, in one-letter code: Acetyl-coenzyme A carboxylase carboxyl transferase subunit alpha (312 aa).

Residues 36-286 form the CoA carboxyltransferase C-terminal domain; sequence ELEKEIEKTF…KTYFLESVKA (251 aa).

It belongs to the AccA family. In terms of assembly, acetyl-CoA carboxylase is a heterohexamer composed of biotin carboxyl carrier protein (AccB), biotin carboxylase (AccC) and two subunits each of ACCase subunit alpha (AccA) and ACCase subunit beta (AccD).

The protein localises to the cytoplasm. It catalyses the reaction N(6)-carboxybiotinyl-L-lysyl-[protein] + acetyl-CoA = N(6)-biotinyl-L-lysyl-[protein] + malonyl-CoA. The protein operates within lipid metabolism; malonyl-CoA biosynthesis; malonyl-CoA from acetyl-CoA: step 1/1. Functionally, component of the acetyl coenzyme A carboxylase (ACC) complex. First, biotin carboxylase catalyzes the carboxylation of biotin on its carrier protein (BCCP) and then the CO(2) group is transferred by the carboxyltransferase to acetyl-CoA to form malonyl-CoA. The sequence is that of Acetyl-coenzyme A carboxylase carboxyl transferase subunit alpha from Sulfurovum sp. (strain NBC37-1).